The sequence spans 255 residues: Flap endonuclease Xni (255 aa).

Aspartate 105 contacts Mg(2+). Positions 163–253 (QYQMLDFIAL…NLKQFRINPI (91 aa)) constitute a 5'-3' exonuclease domain. The K(+) site is built by leucine 172, alanine 173, proline 181, isoleucine 183, and isoleucine 186. The tract at residues 185 to 190 (GIGPKS) is interaction with DNA.

This sequence belongs to the Xni family. Requires Mg(2+) as cofactor. K(+) serves as cofactor.

In terms of biological role, has flap endonuclease activity. During DNA replication, flap endonucleases cleave the 5'-overhanging flap structure that is generated by displacement synthesis when DNA polymerase encounters the 5'-end of a downstream Okazaki fragment. The chain is Flap endonuclease Xni from Shewanella frigidimarina (strain NCIMB 400).